Reading from the N-terminus, the 370-residue chain is Flagellar P-ring protein (370 aa).

The signal sequence occupies residues 1-21 (MKLLLFILMISSIIIVPVGQA).

This sequence belongs to the FlgI family. In terms of assembly, the basal body constitutes a major portion of the flagellar organelle and consists of four rings (L,P,S, and M) mounted on a central rod.

The protein localises to the periplasm. Its subcellular location is the bacterial flagellum basal body. Its function is as follows. Assembles around the rod to form the L-ring and probably protects the motor/basal body from shearing forces during rotation. This chain is Flagellar P-ring protein, found in Pseudoalteromonas atlantica (strain T6c / ATCC BAA-1087).